Reading from the N-terminus, the 789-residue chain is MSDGITGALRNAASVVAPDAIRRRFGAKFAVAFIVVLVVIAGAGVFAFQSTETTVEHQTTRQLAESNQLEADAIGAWMEQQRTHARSVSQDEALRDDRRAAPYILLKDQLLPADVVSMHLVNETRGTVVASTELAIEGRSLAELDAPWTTAAVPEGPGNDSAVWATEQSYRSPVLNDEPVMAFASSVPKREGAHLVVVTRIQPQVDRLSDANSTRRTTILNTGDEPVLDSNSRFDAGALTDSIAAVRNDTTAATTTVSNGRVYALSATPHTDWVTVTSVDTGEAFAVRDTVGQTVTVLVVLAVISLAIVGIALGRHTVTPLKRLRNRAQDIESGTFDVDLSTRRIDEVGRLYGSFDDMRVSLQDRIQEAEAAVEEANAAKAEAEELRTDAEDAQAEAERAKATAEAASERLQERAADYSEVMQAVADGDLTERLDEDADEEAMRAVATEFNAMLDGLEATIAQVAGFADEVADETLQVATGAEEIETTSQTVSERIQEIADGAIQQHDDLERAAGEMDELSASIQEVAASSATVAETAADAVERGEAGRDAAESAIDDMAEIESLSADAVDQILALQERMSDIGDIIEFITDIAEQTNMLALNANIEAARADKDGDGFAVVANEVKDLAEETKQAAADIESEIQAVQAETDETVADIRATSEHIDDGVSTVERAAAAIEDTVDAIEDANHGIQEISDATEDQADATQSVVRRVDDVADISQHVTEDAEQVSAAAEEQSASVAEIARSADDLRDRADALATTVNQFETRADADEPDADTTVDASADDTGD.

Helical transmembrane passes span 29–49 (FAVA…FAFQ) and 294–314 (TVTV…IALG). 2 consecutive HAMP domains span residues 315 to 367 (RHTV…DRIQ) and 409 to 462 (ERLQ…ATIA). One can recognise a Methyl-accepting transducer domain in the interval 481–717 (GAEEIETTSQ…SVVRRVDDVA (237 aa)). Positions 763 to 789 (NQFETRADADEPDADTTVDASADDTGD) are disordered. Residues 772–789 (DEPDADTTVDASADDTGD) show a composition bias toward acidic residues.

The protein belongs to the methyl-accepting chemotaxis (MCP) protein family. Methylated by CheR.

The protein resides in the cell membrane. Functionally, potentially involved in chemo- or phototactic signal transduction. This is Transducer protein Htr6 (htr6) from Halobacterium salinarum (strain ATCC 29341 / DSM 671 / R1).